The primary structure comprises 800 residues: Integrin beta-5 (800 aa).

An N-terminal signal peptide occupies residues 1–24 (MPRAPALLFSCLLGLCALVPRLPG). The Extracellular segment spans residues 25-722 (LNICTSGSAT…PECGTAPSAM (698 aa)). Residues 27 to 76 (ICTSGSATSCEECLLIHPKCAWCFKEDFGSLRSVTSRCDLKANLIRNGCG) form the PSI domain. Disulfide bonds link Cys28–Cys46, Cys36–Cys463, Cys39–Cys64, Cys49–Cys75, Cys202–Cys211, Cys259–Cys300, Cys401–Cys413, Cys433–Cys461, Cys465–Cys484, Cys476–Cys487, Cys489–Cys498, Cys500–Cys530, Cys513–Cys528, Cys522–Cys533, Cys535–Cys548, Cys550–Cys571, Cys555–Cys569, Cys563–Cys574, and Cys576–Cys585. A VWFA domain is found at 136-378 (YPVDLYYLMD…QLIINAYNSI (243 aa)). Positions 147 and 149 each coordinate Mg(2+). Residues Ser149, Asp152, Asp153, and Asp184 each contribute to the Ca(2+) site. Residues Asn242, Asp244, Pro246, and Glu247 each coordinate Ca(2+). Glu247 contacts Mg(2+). Asn347 carries N-linked (GlcNAc...) asparagine glycosylation. Gly362 lines the Ca(2+) pocket. I-EGF domains follow at residues 465–499 (CSAGLEPDSARCSSNGTYVCGLCECNPGYLGTRCE), 500–549 (CQEG…SFCE), 550–586 (CDNFSCARNKGVLCSGHGECHCGECKCHAGYIGDNCN), and 587–626 (CSTDISTCQARDGHICSDRGHCVCGQCQCTEPGAFGETCE). A glycan (N-linked (GlcNAc...) asparagine) is linked at Asn479. Residue Asn552 is glycosylated (N-linked (GlcNAc...) asparagine). N-linked (GlcNAc...) asparagine glycosylation is present at Asn586. Intrachain disulfides connect Cys587–Cys610, Cys594–Cys608, Cys602–Cys613, Cys615–Cys625, Cys628–Cys631, Cys635–Cys683, Cys641–Cys662, Cys644–Cys658, and Cys691–Cys715. Asn655 and Asn706 each carry an N-linked (GlcNAc...) asparagine glycan. Residues 723-743 (TILLAVVGSILLTGFALLVIW) form a helical membrane-spanning segment. Topologically, residues 744-800 (KLLVTIHDRREFAKFQSERSRARYEMASNPLYRKPISTHTVDFTFNKFNKSYNGTVD) are cytoplasmic. Ser771 carries the phosphoserine modification.

The protein belongs to the integrin beta chain family. Heterodimer of an alpha and a beta subunit. Beta-5 (ITGB5) associates with alpha-V (ITGAV). Interacts with MYO10. Interacts with DAB2. Integrin ITGAV:ITGB5 interacts with FBLN5 (via N-terminus). ITGAV:ITGB5 interacts with CCN3. Interacts with tensin TNS3; TNS3 also interacts with PEAK1, thus acting as an adapter molecule to bridge the association of PEAK1 with ITGB5.

The protein resides in the cell membrane. In terms of biological role, integrin alpha-V/beta-5 (ITGAV:ITGB5) is a receptor for fibronectin. It recognizes the sequence R-G-D in its ligand. In Bos taurus (Bovine), this protein is Integrin beta-5 (ITGB5).